Reading from the N-terminus, the 821-residue chain is Bifunctional dethiobiotin synthetase/7,8-diamino-pelargonic acid aminotransferase, mitochondrial (821 aa).

The segment at 28–283 (SPAFAVFGAN…VHVLPPIPED (256 aa)) is dethiobiotin synthetase. An ATP-binding site is contributed by 39 to 44 (GVGKTL). Thr43 contributes to the Mg(2+) binding site. Thr72 is a substrate binding site. A Mg(2+)-binding site is contributed by Glu194. 194 to 197 (ETAG) is an ATP binding site. The tract at residues 316 to 820 (RLNSMQRKSK…AKVHRRLQKL (505 aa)) is 7,8-diamino-pelargonic acid aminotransferase. 374-375 (WW) is a (8S)-8-amino-7-oxononanoate binding site. Residue 436 to 437 (GS) participates in pyridoxal 5'-phosphate binding. A (8S)-8-amino-7-oxononanoate-binding site is contributed by Tyr482. Asp626 contacts pyridoxal 5'-phosphate. Residues Lys655 and Gly689 each coordinate (8S)-8-amino-7-oxononanoate. Lys655 is subject to N6-(pyridoxal phosphate)lysine. A pyridoxal 5'-phosphate-binding site is contributed by Ser691. Arg787 provides a ligand contact to (8S)-8-amino-7-oxononanoate.

The protein in the N-terminal section; belongs to the dethiobiotin synthetase family. It in the C-terminal section; belongs to the class-III pyridoxal-phosphate-dependent aminotransferase family. BioA subfamily. The cofactor is Mg(2+). Pyridoxal 5'-phosphate is required as a cofactor.

It is found in the mitochondrion. The enzyme catalyses (7R,8S)-7,8-diammoniononanoate + CO2 + ATP = (4R,5S)-dethiobiotin + ADP + phosphate + 3 H(+). It carries out the reaction (8S)-8-amino-7-oxononanoate + S-adenosyl-L-methionine = S-adenosyl-4-methylsulfanyl-2-oxobutanoate + (7R,8S)-7,8-diammoniononanoate. Its pathway is cofactor biosynthesis; biotin biosynthesis; biotin from 7,8-diaminononanoate: step 1/2. The protein operates within cofactor biosynthesis; biotin biosynthesis; 7,8-diaminononanoate from 8-amino-7-oxononanoate (SAM route): step 1/1. Functionally, bifunctional enzyme that catalyzes two different reactions involved in the biotin biosynthesis. Its function is as follows. Catalyzes a mechanistically unusual reaction, the ATP-dependent insertion of CO2 between the N7 and N8 nitrogen atoms of 7,8-diaminopelargonic acid (DAPA) to form an ureido ring. Catalyzes the transfer of the alpha-amino group from S-adenosyl-L-methionine (SAM) to 7-keto-8-aminopelargonic acid (KAPA) to form 7,8-diaminopelargonic acid (DAPA). It is the only aminotransferase known to utilize SAM as an amino donor. In Oryza sativa subsp. japonica (Rice), this protein is Bifunctional dethiobiotin synthetase/7,8-diamino-pelargonic acid aminotransferase, mitochondrial (BIO3-BIO1).